Here is a 374-residue protein sequence, read N- to C-terminus: Lipopolysaccharide glucosyltransferase WaaG (374 aa).

UDP-alpha-D-glucose is bound by residues Gly15 and Asp19. The interval 103–132 (YAEKVAQEKGFLYRLTSRYRHYAAFERATF) is membrane-interacting region. UDP-alpha-D-glucose-binding residues include Arg173, Arg208, Lys209, Arg261, Glu281, Ala283, Gly284, Ile285, Val286, and Glu289.

Belongs to the glycosyltransferase group 1 family. Glycosyltransferase 4 subfamily.

Its subcellular location is the cell inner membrane. The protein operates within bacterial outer membrane biogenesis; LPS core biosynthesis. Inhibited by divalent metal ions such as Mg(2+), Mn(2+), Ca(2+), Zn(2+), Co(2+), Ni(2+) and Cu(2+). In terms of biological role, glucosyltransferase involved in the biosynthesis of the core oligosaccharide region of lipopolysaccharide (LPS). Catalyzes the addition of the first outer-core glucose from UDP-glucose to the inner-core heptose II. Cannot use other sugar donors, such as UDP-galactose, UDP-glucuronic acid, UDP-galacuronic acid, GDP-mannose, ADP-glucose and GDP-glucose. In the absence of a lipid acceptor, can slowly hydrolyze UDP-glucose. This is Lipopolysaccharide glucosyltransferase WaaG from Escherichia coli (strain K12).